We begin with the raw amino-acid sequence, 584 residues long: MFS-type transporter gkaD (584 aa).

Positions methionine 1 to threonine 11 are enriched in low complexity. A disordered region spans residues methionine 1 to lysine 60. The N-linked (GlcNAc...) asparagine glycan is linked to asparagine 25. Helical transmembrane passes span phenylalanine 65–alanine 85, leucine 99–phenylalanine 119, tryptophan 134–lysine 154, glycine 167–leucine 187, methionine 196–valine 216, tryptophan 223–leucine 243, tryptophan 262–alanine 282, and valine 293–serine 313. Asparagine 328 carries an N-linked (GlcNAc...) asparagine glycan. The next 6 membrane-spanning stretches (helical) occupy residues alanine 334 to valine 354, valine 369 to leucine 389, leucine 398 to alanine 418, tryptophan 425 to proline 445, threonine 462 to phenylalanine 482, and leucine 536 to leucine 556.

The protein belongs to the major facilitator superfamily.

The protein resides in the membrane. In terms of biological role, MFS-type transporter; part of the gene cluster that mediates the biosynthesis of GKK1032, fungal natural products containing a macrocyclic para-cyclophane connected to a decahydrofluorene ring system that show potent antitumor activities. The chain is MFS-type transporter gkaD from Penicillium citrinum.